Consider the following 384-residue polypeptide: Alanine racemase (384 aa).

The active-site Proton acceptor; specific for D-alanine is the Lys42. Lys42 bears the N6-(pyridoxal phosphate)lysine mark. Arg140 serves as a coordination point for substrate. The active-site Proton acceptor; specific for L-alanine is Tyr271. Met319 serves as a coordination point for substrate.

The protein belongs to the alanine racemase family. Homodimer. Requires pyridoxal 5'-phosphate as cofactor.

The catalysed reaction is L-alanine = D-alanine. The protein operates within amino-acid biosynthesis; D-alanine biosynthesis; D-alanine from L-alanine: step 1/1. Functionally, catalyzes the interconversion of L-alanine and D-alanine. The chain is Alanine racemase (alr) from Mycobacterium tuberculosis (strain CDC 1551 / Oshkosh).